The sequence spans 196 residues: MKITSTIIQTPFPFENNNSHAGIVTEPILGKLIGQGSTAEIFEDVNDSSALYKKYDLIGNQYNEILEMAWQESELFNAFYGDEASVVIQYGGDVYLRMLRVPGTPLSDIDTADIPDNIESLYLQLICKLNELSIIHYDLNTGNMLYDKESESLFPIDFRNIYAEYYAATKKDKEIIDRRLQMRTNDFYSLLNRKYL.

The protein belongs to the protein kinase superfamily. Autophosphorylated.

The protein localises to the secreted. It is found in the host cell. In terms of biological role, effector proteins function to alter host cell physiology and promote bacterial survival in host tissues. This protein is a kinase that is involved in down-regulation of the host innate response induced by invasive bacteria. This chain is Protein kinase OspG (ospG), found in Shigella flexneri serotype X (strain 2002017).